We begin with the raw amino-acid sequence, 524 residues long: Zinc finger protein GLIS2 (524 aa).

Residues 35–174 (ALHRELGLVD…PKQLVCRWAK (140 aa)) form an interaction with CTNND1 region. Disordered stretches follow at residues 39 to 62 (ELGL…FLLN) and 84 to 114 (SPPS…VPSA). Residues 71–137 (GRFSAAPLVD…SSFQFFLPLG (67 aa)) are transcription activation. The span at 84-100 (SPPSGLDSPNGSSSLSP) shows a compositional bias: low complexity. The transcription repression stretch occupies residues 148-171 (SFLTPPKDKCLSPDLPLPKQLVCR). Residues 168–193 (LVCRWAKCNQLFELLQDLVDHVNDYH) form a C2H2-type 1 zinc finger. A C2H2-type 2; atypical zinc finger spans residues 202–229 (YCCHWEGCARHGRGFNARYKMLIHIRTH). 3 consecutive C2H2-type zinc fingers follow at residues 235–257 (HRCP…NRSH), 263–287 (YVCP…TRTH), and 293–317 (YYCK…IKAH). The segment at 439 to 480 (GGKAEGEKGRGSVPTRALGMEGHKTPLERTESSCSRPSPDGL) is disordered. Positions 459–469 (EGHKTPLERTE) are enriched in basic and acidic residues.

This sequence belongs to the GLI C2H2-type zinc-finger protein family. Interacts with CTBP1 and HDAC3. Interacts with CTNNB1. Interacts with SUFU. Interacts with CTNND1. In terms of processing, C-terminus cleavage is induced by interaction with CTNND1 and enhanced by Src tyrosine kinase. Expressed at high levels in kidney and at low levels in heart, lung and placenta. Expressed in colon.

It localises to the nucleus speckle. The protein localises to the cytoplasm. Its function is as follows. Can act either as a transcriptional repressor or as a transcriptional activator, depending on the cell context. Acts as a repressor of the Hedgehog signaling pathway. Represses the Hedgehog-dependent expression of Wnt4. Necessary to maintain the differentiated epithelial phenotype in renal cells through the inhibition of SNAI1, which itself induces the epithelial-to-mesenchymal transition. Represses transcriptional activation mediated by CTNNB1 in the Wnt signaling pathway. May act by recruiting the corepressors CTBP1 and HDAC3. May be involved in neuron differentiation. This Homo sapiens (Human) protein is Zinc finger protein GLIS2 (GLIS2).